The chain runs to 269 residues: Voltage-gated hydrogen channel 1 (269 aa).

The Cytoplasmic segment spans residues 1–96 (MTSHDPKAVT…RLRKLFSSHR (96 aa)). Phosphothreonine is present on Thr-29. Residues 46–79 (ENEEEEEEPAPTSAEGEGNAEGPDAEAGSASTPR) form a disordered region. Ser-93 is modified (phosphoserine). A helical transmembrane segment spans residues 97 to 117 (FQVIIICLVVLDALLVLAELL). Residues 118-134 (LDLKIIEPDEQDYAVTA) are Extracellular-facing. Residues 135-157 (FHYMSFAILVFFMLEIFFKIFVF) form a helical membrane-spanning segment. At 158–165 (RLEFFHHK) the chain is on the cytoplasmic side. The helical transmembrane segment at 166–186 (FEILDAFVVVVSFVLDLVLLF) threads the bilayer. The Extracellular segment spans residues 187-193 (KSHHFEA). A helical membrane pass occupies residues 194–214 (LGLLILLRLWRVARIINGIII). Over 215–269 (SVKTRSERQILRLKQINIQLATKIQHLEFSCSEKEQEIERLNKLLKQNGLLGDVN) the chain is Cytoplasmic. Residues 221-261 (ERQILRLKQINIQLATKIQHLEFSCSEKEQEIERLNKLLKQ) adopt a coiled-coil conformation.

This sequence belongs to the voltage-gated proton channel (VPC) (TC 1.A.51) family. As to quaternary structure, homodimer; each protomer forms its own proton conduction pathway. Phosphorylated in vitro by PRKCD. Phosphorylation may enhance channel gating. Enriched in immune tissues, such as bone marrow, macrophages and spleen.

The protein resides in the cell membrane. Its subcellular location is the apical cell membrane. It localises to the cytoplasmic vesicle. The protein localises to the phagosome membrane. It is found in the cell projection. The protein resides in the cilium. Its subcellular location is the flagellum membrane. It carries out the reaction H(+)(in) = H(+)(out). Its activity is regulated as follows. The dimers display cooperative channel gating. The channel activity is inhibited by zinc ions. Its function is as follows. Voltage-gated proton-selective channel that conducts outward proton currents in response to intracellular acidification. Lacks a canonical ion-channel pore domain and mediates proton permeability via its voltage sensor domain. Provides for proton efflux that compensates for electron charge generated by NADPH oxidase activity either in the extracellular or phagosomal compartments, thus enabling the production of high levels of bactericidal reactive oxygen species during the respiratory burst. Opens when the pH of airway surface liquid exceeds 7 and contributes to respiratory epithelial acid secretion to maintain pH in the mucosa. This Mus musculus (Mouse) protein is Voltage-gated hydrogen channel 1.